Here is a 74-residue protein sequence, read N- to C-terminus: uncharacterized protein (74 aa).

This is an uncharacterized protein from Caenorhabditis elegans.